The primary structure comprises 209 residues: Aspartate kinase-like protein lolA1 (209 aa).

Over residues 1–11 the composition is skewed to basic and acidic residues; the sequence is MLDESPMRKGD. The interval 1-27 is disordered; that stretch reads MLDESPMRKGDSVSNDQSNPESNASVS. The segment covering 12 to 27 has biased composition (polar residues); it reads SVSNDQSNPESNASVS.

Belongs to the aspartokinase family.

It functions in the pathway alkaloid biosynthesis. In terms of biological role, aspartokinase-like protein; part of the gene cluster that mediates the biosynthesis of loline alkaloids, potent insecticidal agents composed of a pyrrolizidine ring system and an uncommon ether bridge linking carbons 2 and 7. Lolines are structurally differentiated by the various modifications of the L-amino group and include norloline, loline, N-methylloline, N-acetylloline, N-acetylnorloline, and N-formylloline. The first committed step is the condensation of O-acetyl-L-homoserine (derived from L-aspartic acid) and L-proline, probably catalyzed by the gamma-type pyridoxal 5'-phosphate(PLP)-dependent enzyme lolC, to give the diamino diacid, NACPP. Ensuing cyclization, decarboxylation, and acetylation steps yield 1-exo-acetamidopyrrolizidine (AcAP). LolO is required for installation of the ether bridge upon the pathway intermediate, 1-exo-acetamidopyrrolizidine (AcAP). In sequential 2-oxoglutarate- and O(2)-consuming steps, lolO removes hydrogens from C2 and C7 of AcAP to form both carbon-oxygen bonds in N-acetylnorloline (NANL), the precursor to all other lolines. The enzymes lolD, lolE, lolF and lolT have also been proposed to be involved in the ether-bridge installation. Further processing of the exocyclic moiety of NANL by fungal N-acetamidase (LolN), methyltransferase (LolM), and cytochrome P450 (LolP) enzymes, with occasional involvement of a plant acetyltransferase, generates the other known lolines. LolN transforms NANL to norlonine which is monomethylated and dimethylated to respectively lonine and N-methyllonine (NML) by lolM. LolP catalyzes hydroxylation of the methyl group in N-methylloline (NML) and further oxygenation to N-formylloline (NFL). A plant acetyltransferase is responsible for the acetylation of loline to form N-acetylloline (NAL). LolA might interact with aspartate kinase to prevent feedback inhibition of its activity by these end products and thereby promote production of L-homoserine from L-aspartate. This Epichloe uncinata (Endophyte fungus) protein is Aspartate kinase-like protein lolA1.